Here is a 73-residue protein sequence, read N- to C-terminus: Large ribosomal subunit protein bL27c (73 aa).

Belongs to the bacterial ribosomal protein bL27 family.

The protein resides in the plastid. It is found in the chloroplast. The protein is Large ribosomal subunit protein bL27c (rpl27) of Chrysochromulina alifera (Plankton alga).